The sequence spans 433 residues: Serine/threonine-protein kinase STK11 (433 aa).

A Phosphoserine modification is found at Ser-31. 2 positions are modified to N6-acetyllysine: Lys-44 and Lys-48. Positions 45–90 are sufficient for interaction with SIRT1; it reads LIGKYLMGDLLGEGSYGKVKEVLDSETLCRRAVKILKKKKLRRIPN. Positions 49–309 constitute a Protein kinase domain; the sequence is YLMGDLLGEG…IRQIRQHSWF (261 aa). ATP-binding positions include 55–63 and Lys-78; that span reads LGEGSYGKV. An N6-acetyllysine mark is found at Lys-96 and Lys-97. The active-site Proton acceptor is the Asp-176. Phosphothreonine; by autocatalysis is present on Thr-189. 2 positions are modified to N6-acetyllysine: Lys-296 and Lys-311. The disordered stretch occupies residues 312-331; that stretch reads KHPPAEAPVPIPPSPDTKDR. Over residues 316–326 the composition is skewed to pro residues; that stretch reads AEAPVPIPPSP. Ser-325 is modified (phosphoserine). Position 336 is a phosphothreonine; by autocatalysis (Thr-336). Phosphothreonine; by ATM and autocatalysis is present on Thr-363. The interval 397-433 is disordered; that stretch reads AAQLSTKSRAEGRAPNPARKACSASSKIRRLSACKQQ. A phosphoserine mark is found at Gln-399 and Ser-401. Residue Lys-416 is modified to N6-acetyllysine. Cys-418 carries S-palmitoyl cysteine lipidation. Lys-423 is subject to N6-acetyllysine. The segment covering 423–433 has biased composition (basic residues); it reads KIRRLSACKQQ. A Phosphoserine; by autocatalysis, PKA, PKC/PRKCZ and RPS6KA1 modification is found at Ser-428. Position 430 is a cysteine methyl ester (Cys-430). Cys-430 carries S-farnesyl cysteine lipidation. Lys-431 bears the N6-acetyllysine mark. A propeptide spans 431 to 433 (removed in mature form); the sequence is KQQ.

It belongs to the protein kinase superfamily. CAMK Ser/Thr protein kinase family. LKB1 subfamily. In terms of assembly, catalytic component of a trimeric complex composed of STK11/LKB1, STRAD (STRADA or STRADB) and CAB39/MO25 (CAB39/MO25alpha or CAB39L/MO25beta): the complex tethers STK11/LKB1 in the cytoplasm and stimulates its catalytic activity. Found in a ternary complex composed of SMAD4, STK11/LKB1 and STK11IP. Interacts with p53/TP53, SMAD4, STK11IP and WDR6. Interacts with NR4A1. Interacts with NISCH; this interaction may increase STK11 activity. Interacts with PTEN; leading to PTEN phosphorylation. Interacts with SIRT1; the interaction deacetylates STK11. Interacts with CDKN1A. It depends on Mg(2+) as a cofactor. Mn(2+) is required as a cofactor. In terms of processing, phosphorylated by ATM at Thr-363 following ionizing radiation (IR). Phosphorylation at Ser-428 by RPS6KA1 and/or some PKA is required to inhibit cell growth. Phosphorylation at Ser-428 is also required during neuronal polarization to mediate phosphorylation of BRSK1 and BRSK2. Phosphorylation by PKC/PRKCZ at Ser-399 in isoform 2 promotes metformin (or peroxynitrite)-induced nuclear export of STK11 and activation of AMPK. UV radiation-induced phosphorylation at Thr-363 mediates CDKN1A degradation. Post-translationally, acetylated. Deacetylation at Lys-48 enhances cytoplasmic localization and kinase activity in vitro. As to expression, ubiquitously expressed. Strongest expression in testis and fetal liver.

The protein resides in the nucleus. Its subcellular location is the cytoplasm. It is found in the membrane. The protein localises to the mitochondrion. The catalysed reaction is L-seryl-[protein] + ATP = O-phospho-L-seryl-[protein] + ADP + H(+). The enzyme catalyses L-threonyl-[protein] + ATP = O-phospho-L-threonyl-[protein] + ADP + H(+). Activated by forming a complex with STRAD (STRADA or STRADB) and CAB39/MO25 (CAB39/MO25alpha or CAB39L/MO25beta): STRADA (or STRADB)-binding promotes a conformational change of STK11/LKB1 in an active conformation, which is stabilized by CAB39/MO25alpha (or CAB39L/MO25beta) interacting with the STK11/LKB1 activation loop. Sequestration in the nucleus by NR4A1 prevents it from phosphorylating and activating cytoplasmic AMPK. In terms of biological role, tumor suppressor serine/threonine-protein kinase that controls the activity of AMP-activated protein kinase (AMPK) family members, thereby playing a role in various processes such as cell metabolism, cell polarity, apoptosis and DNA damage response. Acts by phosphorylating the T-loop of AMPK family proteins, thus promoting their activity: phosphorylates PRKAA1, PRKAA2, BRSK1, BRSK2, MARK1, MARK2, MARK3, MARK4, NUAK1, NUAK2, SIK1, SIK2, SIK3 and SNRK but not MELK. Also phosphorylates non-AMPK family proteins such as STRADA, PTEN and possibly p53/TP53. Acts as a key upstream regulator of AMPK by mediating phosphorylation and activation of AMPK catalytic subunits PRKAA1 and PRKAA2 and thereby regulates processes including: inhibition of signaling pathways that promote cell growth and proliferation when energy levels are low, glucose homeostasis in liver, activation of autophagy when cells undergo nutrient deprivation, and B-cell differentiation in the germinal center in response to DNA damage. Also acts as a regulator of cellular polarity by remodeling the actin cytoskeleton. Required for cortical neuron polarization by mediating phosphorylation and activation of BRSK1 and BRSK2, leading to axon initiation and specification. Involved in DNA damage response: interacts with p53/TP53 and recruited to the CDKN1A/WAF1 promoter to participate in transcription activation. Able to phosphorylate p53/TP53; the relevance of such result in vivo is however unclear and phosphorylation may be indirect and mediated by downstream STK11/LKB1 kinase NUAK1. Also acts as a mediator of p53/TP53-dependent apoptosis via interaction with p53/TP53: translocates to the mitochondrion during apoptosis and regulates p53/TP53-dependent apoptosis pathways. Regulates UV radiation-induced DNA damage response mediated by CDKN1A. In association with NUAK1, phosphorylates CDKN1A in response to UV radiation and contributes to its degradation which is necessary for optimal DNA repair. Its function is as follows. Has a role in spermiogenesis. This Homo sapiens (Human) protein is Serine/threonine-protein kinase STK11.